The following is a 262-amino-acid chain: MKQAWNGWLLALQLFTTIPIRRSIAWNAAHVRWLVRCMPLAGALIGALSAGVYALFSTFSFSSPLVWALLLLWLGIWMAGGMHADGFMDVSDAFFSYRDVKRRQEIMSDPRVGAFAVLSLICLLSFRWLFLYESLQTGIPPALFAAVPLLSRAGAAWLLSVGKLAKPTGMAASLREYSSWRDAIWALGLAFVLLSLLCASTAISVQTGAALAAAAVVLAAAAKPWAEKQFGGITGDVLGALIEGGETVLWGVIWLLHSSVMG.

A run of 8 helical transmembrane segments spans residues 4-26 (AWNG…SIAW), 37-57 (CMPL…ALFS), 59-79 (FSFS…IWMA), 112-132 (VGAF…LFLY), 139-159 (IPPA…AWLL), 183-203 (AIWA…STAI), 205-225 (VQTG…AKPW), and 237-257 (VLGA…WLLH).

This sequence belongs to the CobS family. Requires Mg(2+) as cofactor.

It is found in the cell membrane. The enzyme catalyses alpha-ribazole + adenosylcob(III)inamide-GDP = adenosylcob(III)alamin + GMP + H(+). It carries out the reaction alpha-ribazole 5'-phosphate + adenosylcob(III)inamide-GDP = adenosylcob(III)alamin 5'-phosphate + GMP + H(+). The protein operates within cofactor biosynthesis; adenosylcobalamin biosynthesis; adenosylcobalamin from cob(II)yrinate a,c-diamide: step 7/7. Functionally, joins adenosylcobinamide-GDP and alpha-ribazole to generate adenosylcobalamin (Ado-cobalamin). Also synthesizes adenosylcobalamin 5'-phosphate from adenosylcobinamide-GDP and alpha-ribazole 5'-phosphate. The protein is Adenosylcobinamide-GDP ribazoletransferase of Geobacillus kaustophilus (strain HTA426).